Here is a 161-residue protein sequence, read N- to C-terminus: DNA-directed RNA polymerase 18 kDa subunit (161 aa).

It belongs to the poxviridae DNA-directed RNA polymerase 18 kDa subunit family. The DNA-dependent RNA polymerase used for intermediate and late genes expression consists of eight subunits Rpo30/OPG66, Rpo7/OPG90, Rpo22/OPG103, Rpo147/OPG105, Rpo18/OPG119, Rpo19/OPG131, Rpo132/OPG151 and Rpo35/OPG156. The same holoenzyme, with the addition of the transcription-specificity factor OPG109, is used for early gene expression.

Its subcellular location is the virion. It catalyses the reaction RNA(n) + a ribonucleoside 5'-triphosphate = RNA(n+1) + diphosphate. Functionally, part of the DNA-dependent RNA polymerase which catalyzes the transcription of viral DNA into RNA using the four ribonucleoside triphosphates as substrates. Responsible for the transcription of early, intermediate and late genes. DNA-dependent RNA polymerase associates with the early transcription factor (ETF), itself composed of OPG118 and OPG133, thereby allowing the early genes transcription. Late transcription, and probably also intermediate transcription, require newly synthesized RNA polymerase. The chain is DNA-directed RNA polymerase 18 kDa subunit (OPG119) from Vaccinia virus (strain Ankara) (VACV).